The following is a 475-amino-acid chain: Chromosomal replication initiator protein DnaA (475 aa).

The domain I, interacts with DnaA modulators stretch occupies residues 1–73 (MSDTEQERWS…LSCWQAELPD (73 aa)). Residues 73 to 131 (DVHRIDLTVRSAMRCAAPVREAPATDARHPERSEGRNGVELKTVATAPASANHDALGGS) are domain II. Residues 132–354 (PLDPRLTFQS…GAINRLLAHS (223 aa)) form a domain III, AAA+ region region. Residues glycine 179, glycine 181, lysine 182, and threonine 183 each contribute to the ATP site. The domain IV, binds dsDNA stretch occupies residues 355-475 (KLNAQPVTLE…VELLKRQLQE (121 aa)).

This sequence belongs to the DnaA family. Oligomerizes as a right-handed, spiral filament on DNA at oriC.

The protein localises to the cytoplasm. In terms of biological role, plays an essential role in the initiation and regulation of chromosomal replication. ATP-DnaA binds to the origin of replication (oriC) to initiate formation of the DNA replication initiation complex once per cell cycle. Binds the DnaA box (a 9 base pair repeat at the origin) and separates the double-stranded (ds)DNA. Forms a right-handed helical filament on oriC DNA; dsDNA binds to the exterior of the filament while single-stranded (ss)DNA is stabiized in the filament's interior. The ATP-DnaA-oriC complex binds and stabilizes one strand of the AT-rich DNA unwinding element (DUE), permitting loading of DNA polymerase. After initiation quickly degrades to an ADP-DnaA complex that is not apt for DNA replication. Binds acidic phospholipids. The sequence is that of Chromosomal replication initiator protein DnaA from Nitrobacter winogradskyi (strain ATCC 25391 / DSM 10237 / CIP 104748 / NCIMB 11846 / Nb-255).